The chain runs to 1032 residues: Toll-like receptor 9 (1032 aa).

An N-terminal signal peptide occupies residues methionine 1 to alanine 25. The Extracellular segment spans residues leucine 26–cysteine 818. Cysteines 35 and 45 form a disulfide. Position 47–51 (tryptophan 47–lysine 51) interacts with DNA. 14 LRR repeats span residues arginine 62 to histidine 85, proline 87 to cysteine 110, valine 122 to serine 147, leucine 150 to leucine 166, histidine 167 to valine 190, leucine 198 to serine 221, glutamate 223 to asparagine 242, leucine 243 to cysteine 268, leucine 283 to glycine 306, glycine 308 to glycine 332, leucine 333 to leucine 356, leucine 363 to proline 386, leucine 390 to alanine 413, and proline 415 to alanine 440. N-linked (GlcNAc...) asparagine glycosylation occurs at asparagine 64. DNA contacts are provided by residues serine 72–histidine 77 and lysine 95–proline 109. Cysteines 98 and 110 form a disulfide. Residue asparagine 129 is glycosylated (N-linked (GlcNAc...) asparagine). Residue tyrosine 132 coordinates DNA. Cysteine 178 and cysteine 184 are disulfide-bonded. Tyrosine 179 to lysine 181 is a DNA binding site. The N-linked (GlcNAc...) asparagine glycan is linked to asparagine 200. Tyrosine 208 provides a ligand contact to DNA. Residues asparagine 210 and asparagine 242 are each glycosylated (N-linked (GlcNAc...) asparagine). 2 disulfide bridges follow: cysteine 255-cysteine 268 and cysteine 258-cysteine 265. S-palmitoyl cysteine attachment occurs at residues cysteine 258 and cysteine 265. N-linked (GlcNAc...) asparagine glycosylation occurs at asparagine 300. An N-linked (GlcNAc...) asparagine glycan is attached at asparagine 340. N-linked (GlcNAc...) asparagine glycans are attached at residues asparagine 469, asparagine 474, and asparagine 513. 12 LRR repeats span residues cysteine 470 to glutamine 494, serine 496 to proline 519, leucine 520 to glutamate 543, proline 545 to alanine 572, leucine 574 to threonine 598, leucine 600 to histidine 622, leucine 627 to asparagine 650, proline 652 to phenylalanine 675, leucine 676 to alanine 699, threonine 701 to lysine 723, alanine 724 to proline 747, and alanine 749 to aspartate 772. A disulfide bridge links cysteine 470 with cysteine 500. Asparagine 567 is a glycosylation site (N-linked (GlcNAc...) asparagine). N-linked (GlcNAc...) asparagine glycosylation occurs at asparagine 694. N-linked (GlcNAc...) asparagine glycosylation occurs at asparagine 731. Intrachain disulfides connect cysteine 764-cysteine 790 and cysteine 766-cysteine 809. The helical transmembrane segment at phenylalanine 819 to cysteine 839 threads the bilayer. The Cytoplasmic segment spans residues glycine 840–glutamate 1032. Positions leucine 868–leucine 1013 constitute a TIR domain.

This sequence belongs to the Toll-like receptor family. As to quaternary structure, monomer and homodimer. Exists as a monomer in the absence of unmethylated cytidine-phosphate-guanosine (CpG) ligand. Proteolytic processing of an insertion loop (Z-loop) is required for homodimerization upon binding to the unmethylated CpG ligand leading to its activation. Interacts with MYD88 via their respective TIR domains. Interacts with BTK. Interacts (via transmembrane domain) with UNC93B1. Interacts with CD300LH; the interaction may promote full activation of TLR9-triggered innate responses. Interacts with CNPY3 and HSP90B1; this interaction is required for proper folding in the endoplasmic reticulum. Interacts with SMPDL3B. Interacts with CD82; this interaction is essential for TLR9-dependent myddosome formation in response to CpG stimulation. In terms of processing, activated by proteolytic cleavage of the flexible loop between repeats LRR14 and LRR15 within the ectodomain. Cleavage requires UNC93B1. Proteolytically processed by first removing the majority of the ectodomain by either asparagine endopeptidase (AEP) or a cathepsin followed by a trimming event that is solely cathepsin mediated and required for optimal receptor signaling. Palmitoylated by ZDHHC3 in the Golgi regulates TLR9 trafficking from the Golgi to endosomes. Depalmitoylation by PPT1 controls the release of TLR9 from UNC93B1 in endosomes. In terms of tissue distribution, highly expressed in spleen, lymph node, tonsil and peripheral blood leukocytes, especially in plasmacytoid pre-dendritic cells. Levels are much lower in monocytes and CD11c+ immature dendritic cells. Also detected in lung and liver.

The protein resides in the endoplasmic reticulum membrane. It is found in the early endosome membrane. The protein localises to the lysosome. Its subcellular location is the cytoplasmic vesicle. It localises to the phagosome. The protein resides in the golgi apparatus membrane. Key component of innate and adaptive immunity. TLRs (Toll-like receptors) control host immune response against pathogens through recognition of molecular patterns specific to microorganisms. TLR9 is a nucleotide-sensing TLR which is activated by unmethylated cytidine-phosphate-guanosine (CpG) dinucleotides. Acts via MYD88 and TRAF6, leading to NF-kappa-B activation, cytokine secretion and the inflammatory response. Controls lymphocyte response to Helicobacter infection. Upon CpG stimulation, induces B-cell proliferation, activation, survival and antibody production. The polypeptide is Toll-like receptor 9 (TLR9) (Homo sapiens (Human)).